Consider the following 230-residue polypeptide: RING finger protein 141 (230 aa).

The N-myristoyl glycine moiety is linked to residue glycine 2. The RING-type zinc finger occupies 155 to 192 (CCICMDGRADLILPCAHSFCQKCIDKWSDRHRNCPICR).

It localises to the membrane. In terms of biological role, may be involved in spermatogenesis. In Bos taurus (Bovine), this protein is RING finger protein 141 (RNF141).